A 757-amino-acid polypeptide reads, in one-letter code: RNA-directed RNA polymerase catalytic subunit (757 aa).

A disordered region spans residues 50–82 (SEKGKWTTNTETGAPQLNPIDGPLPEDNEPSGY). The segment covering 55-64 (WTTNTETGAP) has biased composition (polar residues). 2 consecutive short sequence motifs (nuclear localization signal) follow at residues 187–195 (RKRRVRDNM) and 203–216 (RTIG…NKRS). The segment at 249–256 (RGFVYFVE) is promoter-binding site. Residues 286 to 483 (VRKMMTNSQD…GINMSKKKSY (198 aa)) enclose the RdRp catalytic domain.

It belongs to the influenza viruses polymerase PB1 family. As to quaternary structure, influenza RNA polymerase is composed of three subunits: PB1, PB2 and PA. Interacts (via N-terminus) with PA (via C-terminus). Interacts (via C-terminus) with PB2 (via N-terminus); this interaction is essential for transcription initiation. Phosphorylated by host PRKCA.

It is found in the host nucleus. The protein localises to the host cytoplasm. The catalysed reaction is RNA(n) + a ribonucleoside 5'-triphosphate = RNA(n+1) + diphosphate. RNA-dependent RNA polymerase which is responsible for replication and transcription of virus RNA segments. The transcription of viral mRNAs occurs by a unique mechanism called cap-snatching. 5' methylated caps of cellular mRNAs are cleaved after 10-13 nucleotides by PA. In turn, these short capped RNAs are used as primers by PB1 for transcription of viral mRNAs. During virus replication, PB1 initiates RNA synthesis and copy vRNA into complementary RNA (cRNA) which in turn serves as a template for the production of more vRNAs. The chain is RNA-directed RNA polymerase catalytic subunit from Influenza A virus (strain A/Port Chalmers/1/1973 H3N2).